The sequence spans 104 residues: AVIToxin-VAR2 (104 aa).

Positions 1 to 19 are cleaved as a signal peptide; that stretch reads MRSLLCAPLLLLLLSAGES. 5 cysteine pairs are disulfide-bonded: C26–C38, C32–C50, C37–C78, C60–C86, and C80–C96.

This sequence belongs to the AVIT (prokineticin) family. In terms of tissue distribution, expressed by the venom gland.

It localises to the secreted. Functionally, potent agonist for both PKR1/PROKR1 and PKR2/PROKR2. Potently contracts gastrointestinal (GI) smooth muscle. In Varanus varius (Lace monitor lizard), this protein is AVIToxin-VAR2.